Consider the following 462-residue polypeptide: Trigger factor (462 aa).

A PPIase FKBP-type domain is found at 172–257 (GDKATIDFVG…LKALAAPGET (86 aa)). The interval 443-462 (LLAADEEDEEEAAESSAALV) is disordered. Positions 444–455 (LAADEEDEEEAA) are enriched in acidic residues.

It belongs to the FKBP-type PPIase family. Tig subfamily.

Its subcellular location is the cytoplasm. It carries out the reaction [protein]-peptidylproline (omega=180) = [protein]-peptidylproline (omega=0). In terms of biological role, involved in protein export. Acts as a chaperone by maintaining the newly synthesized protein in an open conformation. Functions as a peptidyl-prolyl cis-trans isomerase. The protein is Trigger factor of Methylocella silvestris (strain DSM 15510 / CIP 108128 / LMG 27833 / NCIMB 13906 / BL2).